Reading from the N-terminus, the 620-residue chain is Chaperone protein DnaK (620 aa).

Thr197 is modified (phosphothreonine; by autocatalysis). Residues 597–620 (AMANKNNAEQPKKKDDDVIDAEVE) are disordered.

The protein belongs to the heat shock protein 70 family.

Functionally, acts as a chaperone. The sequence is that of Chaperone protein DnaK from Helicobacter pylori (strain Shi470).